The sequence spans 279 residues: Thymidylate synthase (279 aa).

DUMP is bound at residue arginine 29. Histidine 59 contacts (6R)-5,10-methylene-5,6,7,8-tetrahydrofolate. 134-135 (RR) provides a ligand contact to dUMP. Cysteine 154 serves as the catalytic Nucleophile. Residues 181–184 (RSAD), asparagine 192, and 222–224 (HIY) contribute to the dUMP site. Aspartate 184 lines the (6R)-5,10-methylene-5,6,7,8-tetrahydrofolate pocket. Alanine 278 is a binding site for (6R)-5,10-methylene-5,6,7,8-tetrahydrofolate.

Belongs to the thymidylate synthase family. Bacterial-type ThyA subfamily. In terms of assembly, homodimer.

The protein resides in the cytoplasm. It catalyses the reaction dUMP + (6R)-5,10-methylene-5,6,7,8-tetrahydrofolate = 7,8-dihydrofolate + dTMP. It participates in pyrimidine metabolism; dTTP biosynthesis. Its function is as follows. Catalyzes the reductive methylation of 2'-deoxyuridine-5'-monophosphate (dUMP) to 2'-deoxythymidine-5'-monophosphate (dTMP) while utilizing 5,10-methylenetetrahydrofolate (mTHF) as the methyl donor and reductant in the reaction, yielding dihydrofolate (DHF) as a by-product. This enzymatic reaction provides an intracellular de novo source of dTMP, an essential precursor for DNA biosynthesis. The sequence is that of Thymidylate synthase from Paracidovorax citrulli (strain AAC00-1) (Acidovorax citrulli).